Here is a 241-residue protein sequence, read N- to C-terminus: ATP synthase subunit a (241 aa).

The next 5 membrane-spanning stretches (helical) occupy residues 30 to 50 (GQVF…VLVG), 89 to 109 (LPFI…GALI), 128 to 148 (INTT…AGLS), 193 to 213 (LAVG…VMLL), and 214 to 234 (GLFT…FYIG).

It belongs to the ATPase A chain family. In terms of assembly, F-type ATPases have 2 components, CF(1) - the catalytic core - and CF(0) - the membrane proton channel. CF(1) has five subunits: alpha(3), beta(3), gamma(1), delta(1), epsilon(1). CF(0) has four main subunits: a, b, b' and c.

The protein resides in the cellular thylakoid membrane. Its function is as follows. Key component of the proton channel; it plays a direct role in the translocation of protons across the membrane. The sequence is that of ATP synthase subunit a from Synechococcus sp. (strain CC9902).